We begin with the raw amino-acid sequence, 194 residues long: WASH complex subunit 3 (194 aa).

The residue at position 1 (Met-1) is an N-acetylmethionine. Positions Thr-46–Ser-74 form a coiled coil. 2 disordered regions span residues Ser-93–Glu-121 and Glu-159–Asp-194. A compositionally biased stretch (polar residues) spans Thr-103 to Glu-121.

It belongs to the CCDC53 family. Component of the WASH core complex also described as WASH regulatory complex (SHRC) composed of WASH (WASHC1, WASH2P or WASH3P), WASHC2 (WASHC2A or WASHC2C), WASHC3, WASHC4 and WASHC5. The WASH core complex associates via WASHC2 with the F-actin-capping protein dimer (formed by CAPZA1, CAPZA2 or CAPZA3 and CAPZB) in a transient or substoichiometric manner which was initially described as WASH complex.

The protein resides in the early endosome. Its function is as follows. Acts as a component of the WASH core complex that functions as a nucleation-promoting factor (NPF) at the surface of endosomes, where it recruits and activates the Arp2/3 complex to induce actin polymerization, playing a key role in the fission of tubules that serve as transport intermediates during endosome sorting. The sequence is that of WASH complex subunit 3 from Homo sapiens (Human).